The following is an 87-amino-acid chain: Putative defensin-like protein 169 (87 aa).

A signal peptide spans 1-21; sequence MKKTFSFTVLILFVIPLLVTG. Cystine bridges form between Cys36/Cys86, Cys48/Cys74, Cys53/Cys80, and Cys57/Cys82.

This sequence belongs to the DEFL family.

The protein resides in the secreted. This chain is Putative defensin-like protein 169, found in Arabidopsis thaliana (Mouse-ear cress).